A 674-amino-acid polypeptide reads, in one-letter code: CLK4-associating serine/arginine rich protein (674 aa).

Ser-101 carries the phosphoserine modification. Disordered regions lie at residues 171–232 (TVAE…GMAD) and 258–674 (EKAM…HYRH). Residues 182–214 (PEEEESAAEEESNSDEDEVIPDIDVEVDVDELN) are compositionally biased toward acidic residues. The segment covering 265-283 (RRSRRQRREFREKRLRGRK) has biased composition (basic residues). Phosphoserine is present on residues Ser-285 and Ser-294. Residues 290-313 (ARRDSPTYDPYKRSPSESSSESRS) show a composition bias toward basic and acidic residues. Thr-327 is subject to Phosphothreonine. Phosphoserine occurs at positions 331 and 335. Positions 356–365 (PPAPPQPGGP) are enriched in pro residues. Residues 378–399 (SSSSSSSSASRTSSSRSSSRSS) are compositionally biased toward low complexity. Basic residues-rich tracts occupy residues 411-443 (SGRH…RRHS) and 481-492 (RGGRGLRHHSSS). Composition is skewed to low complexity over residues 493-506 (RSRS…SRSR) and 514-532 (HSPS…SQSP). At Ser-547 the chain carries Phosphoserine. A Phosphothreonine modification is found at Thr-573. Positions 585-647 (ALNRQFKADK…ERQYSRQSRS (63 aa)) form a coiled coil. Basic and acidic residues-rich tracts occupy residues 590–617 (FKAD…ELRA) and 625–641 (KERE…ERQY). Low complexity predominate over residues 642–651 (SRQSRSPSPR). Residues 659-674 (SRRRSRSRSRSPHYRH) show a composition bias toward basic residues.

This sequence belongs to the splicing factor SR family. As to quaternary structure, probably interacts with CLK4. Phosphorylated in vitro by CLK4.

The protein resides in the nucleus. Its function is as follows. Probably functions as an alternative splicing regulator. May regulate the mRNA splicing of genes such as CLK1. May act by regulating members of the CLK kinase family. This chain is CLK4-associating serine/arginine rich protein (CLASRP), found in Homo sapiens (Human).